A 344-amino-acid chain; its full sequence is Chalcone synthase A (344 aa).

Residue cysteine 167 is part of the active site.

Belongs to the thiolase-like superfamily. Chalcone/stilbene synthases family.

The enzyme catalyses (E)-4-coumaroyl-CoA + 3 malonyl-CoA + 3 H(+) = 2',4,4',6'-tetrahydroxychalcone + 3 CO2 + 4 CoA. It functions in the pathway secondary metabolite biosynthesis; flavonoid biosynthesis. The primary product of this enzyme is 4,2',4',6'-tetrahydroxychalcone (also termed naringenin-chalcone or chalcone) which can under specific conditions spontaneously isomerize into naringenin. This is Chalcone synthase A (CHSA) from Ipomoea nil (Japanese morning glory).